A 447-amino-acid polypeptide reads, in one-letter code: MREIVHLQTGQCGNQIGAAFWQTISGEHGLDGSGVYNGTSDLQLERMNVYFNEASGNKYVPRAVLVDLEPGTMDAVRAGPFGQLFRPDNFVFGQSGAGNNWAKGHYTEGAELVDQVLDVVRREAEGCDCLQGFQITHSLGGGTGAGMGTLLISKIREEFPDRMMATFSVMPSPKVSDTVVEPYNATLSVHQLVENSDETFCIDNEALYDICMRTLKLNNPSYGDLNHLVSAVMSGVTTCLRFPGQLNSDLRKLAVNMVPFPRLHFFMVGFAPLTSRGAHSFRAVTVPELTQQIFDPKNMMAASDFRNGRYLTCSAIYRGKVSMKEVEDQIRNVQNKNTAYFVEWIPNNVQTALCSIPPRGLKMSSTFVGNSTSIQELFKRVGDQFTAMFRRKAFLHWYTGEGMDEMEFTEAESNMNDLVSEYQQYQEASVSEGEEEYDEEAPLEGEE.

Residues Gln11, Glu69, Ser138, Gly142, Thr143, Gly144, Asn204, and Asn226 each coordinate GTP. Residue Glu69 coordinates Mg(2+). The interval 424–447 (QYQEASVSEGEEEYDEEAPLEGEE) is disordered. Residues 432-447 (EGEEEYDEEAPLEGEE) show a composition bias toward acidic residues.

It belongs to the tubulin family. Dimer of alpha and beta chains. A typical microtubule is a hollow water-filled tube with an outer diameter of 25 nm and an inner diameter of 15 nM. Alpha-beta heterodimers associate head-to-tail to form protofilaments running lengthwise along the microtubule wall with the beta-tubulin subunit facing the microtubule plus end conferring a structural polarity. Microtubules usually have 13 protofilaments but different protofilament numbers can be found in some organisms and specialized cells. Requires Mg(2+) as cofactor.

It is found in the cytoplasm. It localises to the cytoskeleton. Functionally, tubulin is the major constituent of microtubules, a cylinder consisting of laterally associated linear protofilaments composed of alpha- and beta-tubulin heterodimers. Microtubules grow by the addition of GTP-tubulin dimers to the microtubule end, where a stabilizing cap forms. Below the cap, tubulin dimers are in GDP-bound state, owing to GTPase activity of alpha-tubulin. The polypeptide is Tubulin beta chain (TUB1) (Dothistroma septosporum (Red band needle blight fungus)).